The chain runs to 205 residues: Large ribosomal subunit protein uL4 (205 aa).

Residues 56–76 form a disordered region; it reads VSGTTAKPYRQKHTGRARQGS.

It belongs to the universal ribosomal protein uL4 family. As to quaternary structure, part of the 50S ribosomal subunit.

One of the primary rRNA binding proteins, this protein initially binds near the 5'-end of the 23S rRNA. It is important during the early stages of 50S assembly. It makes multiple contacts with different domains of the 23S rRNA in the assembled 50S subunit and ribosome. Functionally, forms part of the polypeptide exit tunnel. The protein is Large ribosomal subunit protein uL4 of Ehrlichia ruminantium (strain Welgevonden).